We begin with the raw amino-acid sequence, 221 residues long: N-(5'-phosphoribosyl)anthranilate isomerase (221 aa).

The protein belongs to the TrpF family.

The catalysed reaction is N-(5-phospho-beta-D-ribosyl)anthranilate = 1-(2-carboxyphenylamino)-1-deoxy-D-ribulose 5-phosphate. It participates in amino-acid biosynthesis; L-tryptophan biosynthesis; L-tryptophan from chorismate: step 3/5. The polypeptide is N-(5'-phosphoribosyl)anthranilate isomerase (Chlorobaculum tepidum (strain ATCC 49652 / DSM 12025 / NBRC 103806 / TLS) (Chlorobium tepidum)).